The following is a 231-amino-acid chain: Phosphatidylserine decarboxylase proenzyme (231 aa).

The Schiff-base intermediate with substrate; via pyruvic acid role is filled by Ser-188. Ser-188 carries the post-translational modification Pyruvic acid (Ser); by autocatalysis.

Belongs to the phosphatidylserine decarboxylase family. PSD-A subfamily. Heterodimer of a large membrane-associated beta subunit and a small pyruvoyl-containing alpha subunit. Requires pyruvate as cofactor. In terms of processing, is synthesized initially as an inactive proenzyme. Formation of the active enzyme involves a self-maturation process in which the active site pyruvoyl group is generated from an internal serine residue via an autocatalytic post-translational modification. Two non-identical subunits are generated from the proenzyme in this reaction, and the pyruvate is formed at the N-terminus of the alpha chain, which is derived from the carboxyl end of the proenzyme. The post-translation cleavage follows an unusual pathway, termed non-hydrolytic serinolysis, in which the side chain hydroxyl group of the serine supplies its oxygen atom to form the C-terminus of the beta chain, while the remainder of the serine residue undergoes an oxidative deamination to produce ammonia and the pyruvoyl prosthetic group on the alpha chain.

It is found in the cell membrane. It carries out the reaction a 1,2-diacyl-sn-glycero-3-phospho-L-serine + H(+) = a 1,2-diacyl-sn-glycero-3-phosphoethanolamine + CO2. It participates in phospholipid metabolism; phosphatidylethanolamine biosynthesis; phosphatidylethanolamine from CDP-diacylglycerol: step 2/2. Functionally, catalyzes the formation of phosphatidylethanolamine (PtdEtn) from phosphatidylserine (PtdSer). The chain is Phosphatidylserine decarboxylase proenzyme from Rickettsia akari (strain Hartford).